The following is a 165-amino-acid chain: Natriuretic peptide Na-NP (165 aa).

Positions 1–25 (MVGLSRLAGGGLLLVLALLPLALDG) are cleaved as a signal peptide. Residues 26-83 (KPAPEALHKPPTGLRTSLAALRILGYLRPDSKQSRAARDRMLHPEQQVGGGGDSRPLQ) constitute a propeptide that is removed on maturation. The span at 56–68 (SKQSRAARDRMLH) shows a compositional bias: basic and acidic residues. 2 disordered regions span residues 56 to 100 (SKQS…QKID) and 135 to 165 (PDSK…SRVI). C94 and C110 are oxidised to a cystine. A propeptide spanning residues 129–165 (ILEYLRPDSKRSRATRDRMLHPEQQVGGGGGGGSRVI) is cleaved from the precursor. The span at 135–149 (PDSKRSRATRDRMLH) shows a compositional bias: basic and acidic residues. Residues 154–165 (VGGGGGGGSRVI) show a composition bias toward gly residues.

It belongs to the natriuretic peptide family. Expressed by the venom gland.

The protein resides in the secreted. In terms of biological role, natriuretic peptide that dose-dependently induces the rapid relaxation of rat aortic strips phenylephrine-precontracted. Acts by stimulating cGMP production in a dose-dependent manner (by probably activating NPR1 and/or NPR2). May also show potent hypotensive effects. The polypeptide is Natriuretic peptide Na-NP (Naja atra (Chinese cobra)).